A 98-amino-acid chain; its full sequence is Cysteine-rich and transmembrane domain-containing protein WIH2 (98 aa).

The disordered stretch occupies residues 1 to 77 (MSQYNQPPVG…PPQHQQQQSS (77 aa)). Residues 9-21 (VGVPPPQGYPPEG) are compositionally biased toward pro residues. Over residues 37–55 (YPQQGYPPQGYPQQGYPQQ) the composition is skewed to low complexity. Positions 56–70 (GYPPPYAPQYPPPPQ) are enriched in pro residues. Residues 75–92 (QSSPGFLEGCLAALCCCC) traverse the membrane as a helical segment.

This sequence belongs to the CYSTM1 family. In terms of tissue distribution, expressed in floral organ primordia.

It localises to the membrane. In terms of biological role, required for the promotion of megasporogenesis, or promotion of germ cell formation from somatic precursor cells. Acts redundantly with WIH1. Functions in a genetic pathway downstream of SPL/NZZ and WUS and together with TRN2 in promoting megasporogenesis. The sequence is that of Cysteine-rich and transmembrane domain-containing protein WIH2 from Arabidopsis thaliana (Mouse-ear cress).